The following is a 191-amino-acid chain: Nascent polypeptide-associated complex subunit alpha (191 aa).

The region spanning 24 to 89 (SRPERKARKA…AKVEDPNSAA (66 aa)) is the NAC-A/B domain. A disordered region spans residues 126–149 (QDAPSADSSAPAPSGEATDASASG). Positions 127–139 (DAPSADSSAPAPS) are enriched in low complexity. The region spanning 153–191 (VSDEEIQLIVAQTGVDEAKAREAYISEKGDLINAIMKLQ) is the UBA domain.

The protein belongs to the NAC-alpha family. As to quaternary structure, part of the nascent polypeptide-associated complex (NAC), consisting of EGD2 and EGD1. NAC associates with ribosomes via EGD1.

The protein resides in the cytoplasm. The protein localises to the nucleus. Component of the nascent polypeptide-associated complex (NAC), a dynamic component of the ribosomal exit tunnel, protecting the emerging polypeptides from interaction with other cytoplasmic proteins to ensure appropriate nascent protein targeting. The NAC complex also promotes mitochondrial protein import by enhancing productive ribosome interactions with the outer mitochondrial membrane and blocks the inappropriate interaction of ribosomes translating non-secretory nascent polypeptides with translocation sites in the membrane of the endoplasmic reticulum. EGD2 may also be involved in transcription regulation. The chain is Nascent polypeptide-associated complex subunit alpha (EGD2) from Cryptococcus neoformans var. neoformans serotype D (strain B-3501A) (Filobasidiella neoformans).